Reading from the N-terminus, the 1163-residue chain is Integrin alpha-X (1163 aa).

Residues 1–19 (MTRTRAALLLFTALATSLG) form the signal peptide. Residues 20 to 1107 (FNLDTEELTA…EKYKVHNPTP (1088 aa)) lie on the Extracellular side of the membrane. FG-GAP repeat units follow at residues 23–78 (DTEE…ACEP) and 79–138 (IGLQ…TQRL). N-linked (GlcNAc...) asparagine glycosylation is present at Asn61. A disulfide bond links Cys69 and Cys76. Residue Asn89 is glycosylated (N-linked (GlcNAc...) asparagine). Cystine bridges form between Cys108–Cys126 and Cys116–Cys145. Asp157, Ser159, Ser161, and Asp259 together coordinate Mg(2+). In terms of domain architecture, VWFA spans 165–339 (RNFATMMNFV…KEKIFAIEGT (175 aa)). FG-GAP repeat units lie at residues 340-391 (ETTS…PTFI), 392-443 (NMSQ…SRQW), 444-504 (RMKA…WRRW), 507-565 (DAVL…PSIS), and 570-630 (QRIA…FIPA). An N-linked (GlcNAc...) asparagine glycan is attached at Asn392. Ca(2+) contacts are provided by Asp466, Asp468, Asp470, and Asp474. Cys495 and Cys506 are disulfide-bonded. Ca(2+) contacts are provided by Asp530, Asn532, Asp534, Asp538, Asp593, Asp597, and Asp601. 2 disulfides stabilise this stretch: Cys639/Cys722 and Cys655/Cys712. 2 N-linked (GlcNAc...) asparagine glycosylation sites follow: Asn697 and Asn735. 2 disulfide bridges follow: Cys771/Cys777 and Cys848/Cys863. Asn899 and Asn939 each carry an N-linked (GlcNAc...) asparagine glycan. Intrachain disulfides connect Cys998–Cys1022 and Cys1027–Cys1032. The N-linked (GlcNAc...) asparagine glycan is linked to Asn1050. A helical transmembrane segment spans residues 1108–1128 (LIVGSSIGGLLLLALITAVLY). The Cytoplasmic segment spans residues 1129-1163 (KVGFFKRQYKEMMEEANGQIAPENGTQTPSPPSEK). The GFFKR motif motif lies at 1131–1135 (GFFKR).

Belongs to the integrin alpha chain family. Heterodimer of an alpha and a beta subunit. Alpha-X associates with beta-2. Predominantly expressed in monocytes and granulocytes.

Its subcellular location is the membrane. Its function is as follows. Integrin alpha-X/beta-2 is a receptor for fibrinogen. It recognizes the sequence G-P-R in fibrinogen. It mediates cell-cell interaction during inflammatory responses. It is especially important in monocyte adhesion and chemotaxis. This chain is Integrin alpha-X (ITGAX), found in Homo sapiens (Human).